A 270-amino-acid polypeptide reads, in one-letter code: Elongation factor Ts (270 aa).

The segment at 76-79 is involved in Mg(2+) ion dislocation from EF-Tu; the sequence is TDFV.

Belongs to the EF-Ts family.

Its subcellular location is the cytoplasm. Associates with the EF-Tu.GDP complex and induces the exchange of GDP to GTP. It remains bound to the aminoacyl-tRNA.EF-Tu.GTP complex up to the GTP hydrolysis stage on the ribosome. The protein is Elongation factor Ts of Corynebacterium aurimucosum (strain ATCC 700975 / DSM 44827 / CIP 107346 / CN-1) (Corynebacterium nigricans).